The sequence spans 80 residues: MKLTRVLIIAVLFLTAYQLTTVETYSRGKWMHRALRSTGKNPKVTRECSSPDESCTYHYNCCQLYCNKEENVCLENSPEV.

The signal sequence occupies residues 1–24 (MKLTRVLIIAVLFLTAYQLTTVET). Residues 25 to 47 (YSRGKWMHRALRSTGKNPKVTRE) constitute a propeptide that is removed on maturation. Disulfide bonds link Cys48/Cys62, Cys55/Cys66, and Cys61/Cys73.

Belongs to the conotoxin O1 superfamily. As to expression, expressed by the venom duct.

The protein resides in the secreted. The sequence is that of Conotoxin Lt6.2 from Conus litteratus (Lettered cone).